Consider the following 348-residue polypeptide: Protein RecA (348 aa).

Glycine 65–threonine 72 contacts ATP. Positions glutamine 326–glutamate 348 are disordered. The span at serine 336–glutamate 348 shows a compositional bias: acidic residues.

Belongs to the RecA family.

The protein localises to the cytoplasm. In terms of biological role, can catalyze the hydrolysis of ATP in the presence of single-stranded DNA, the ATP-dependent uptake of single-stranded DNA by duplex DNA, and the ATP-dependent hybridization of homologous single-stranded DNAs. It interacts with LexA causing its activation and leading to its autocatalytic cleavage. The protein is Protein RecA of Campylobacter hominis (strain ATCC BAA-381 / DSM 21671 / CCUG 45161 / LMG 19568 / NCTC 13146 / CH001A).